Here is a 412-residue protein sequence, read N- to C-terminus: CCA-adding enzyme (412 aa).

ATP is bound by residues S41 and K44. CTP contacts are provided by S41 and K44. D53, D55, and D106 together coordinate Mg(2+). The ATP site is built by H129, K149, and Y158. CTP is bound by residues H129, K149, and Y158.

The protein belongs to the tRNA nucleotidyltransferase/poly(A) polymerase family. Archaeal CCA-adding enzyme subfamily. As to quaternary structure, homodimer. Mg(2+) serves as cofactor.

The enzyme catalyses a tRNA precursor + 2 CTP + ATP = a tRNA with a 3' CCA end + 3 diphosphate. It catalyses the reaction a tRNA with a 3' CCA end + 2 CTP + ATP = a tRNA with a 3' CCACCA end + 3 diphosphate. Functionally, catalyzes the addition and repair of the essential 3'-terminal CCA sequence in tRNAs without using a nucleic acid template. Adds these three nucleotides in the order of C, C, and A to the tRNA nucleotide-73, using CTP and ATP as substrates and producing inorganic pyrophosphate. tRNA 3'-terminal CCA addition is required both for tRNA processing and repair. Also involved in tRNA surveillance by mediating tandem CCA addition to generate a CCACCA at the 3' terminus of unstable tRNAs. While stable tRNAs receive only 3'-terminal CCA, unstable tRNAs are marked with CCACCA and rapidly degraded. This chain is CCA-adding enzyme, found in Saccharolobus islandicus (strain Y.N.15.51 / Yellowstone #2) (Sulfolobus islandicus).